The chain runs to 202 residues: Ribonuclease HII (202 aa).

In terms of domain architecture, RNase H type-2 spans 14 to 202 (LPLAGVDEAG…VAQFSLFPAA (189 aa)). A divalent metal cation is bound by residues aspartate 20, glutamate 21, and aspartate 111.

Belongs to the RNase HII family. Mn(2+) is required as a cofactor. Mg(2+) serves as cofactor.

It is found in the cytoplasm. It carries out the reaction Endonucleolytic cleavage to 5'-phosphomonoester.. In terms of biological role, endonuclease that specifically degrades the RNA of RNA-DNA hybrids. This is Ribonuclease HII from Rhizorhabdus wittichii (strain DSM 6014 / CCUG 31198 / JCM 15750 / NBRC 105917 / EY 4224 / RW1) (Sphingomonas wittichii).